A 198-amino-acid polypeptide reads, in one-letter code: Sulfite reductase, dissimilatory-type subunit alpha (198 aa).

Residues Cys45, Cys64, Cys67, and Cys70 each contribute to the [4Fe-4S] cluster site. In terms of domain architecture, 4Fe-4S ferredoxin-type spans 55-83; the sequence is GTLSIDNKNCTRCMHCINTMPRALKIGDE.

In terms of assembly, heterohexamer of two alpha, two beta and two gamma subunits.

Functionally, part of the complex that catalyzes the reduction of sulfite to sulfide. The alpha and beta subunits may have arisen by gene duplication. They both bind 2 iron-sulfur clusters, but the alpha subunit seems to be catalytically inactive, due to substitutions along the putative substrate access channel, and because it binds sirohydrochlorin (the dematallated form of siroheme) instead of siroheme. This Megalodesulfovibrio gigas (strain ATCC 19364 / DSM 1382 / NCIMB 9332 / VKM B-1759) (Desulfovibrio gigas) protein is Sulfite reductase, dissimilatory-type subunit alpha (dsrA).